Consider the following 756-residue polypeptide: Multicystatin (756 aa).

Cystatin domains are found at residues 3–96 (IVGG…DDST), 97–191 (MPGG…DDIA), 192–285 (KLGG…DDSA), 286–380 (KTGG…DSAK), 381–474 (KLGG…DDSA), 475–568 (KLGG…DDSA), 569–662 (IIGG…DDSA), and 663–756 (KPGG…DATK). 8 consecutive short sequence motifs (secondary area of contact) follow at residues 48 to 52 (QIVAG), 142 to 146 (QVVAG), 237 to 241 (QVVAG), 331 to 335 (QLVSG), 426 to 430 (QVVAG), 520 to 524 (QLVAG), 614 to 618 (QLVAG), and 708 to 712 (QVVAG).

The protein belongs to the cystatin family. Phytocystatin subfamily. As to expression, expressed abundantly in tuber and leaf.

In terms of biological role, probably has a role in the plant's defense system. The chain is Multicystatin from Solanum tuberosum (Potato).